The following is a 383-amino-acid chain: tRNA-specific 2-thiouridylase MnmA (383 aa).

ATP is bound by residues 9–16 (GMSGGVDS) and M35. Positions 95-97 (NPD) are interaction with target base in tRNA. The active-site Nucleophile is the C100. C100 and C196 are disulfide-bonded. G124 serves as a coordination point for ATP. The segment at 146–148 (KDQ) is interaction with tRNA. The active-site Cysteine persulfide intermediate is C196. Residues 308–309 (RY) form an interaction with tRNA region.

It belongs to the MnmA/TRMU family.

Its subcellular location is the cytoplasm. The catalysed reaction is S-sulfanyl-L-cysteinyl-[protein] + uridine(34) in tRNA + AH2 + ATP = 2-thiouridine(34) in tRNA + L-cysteinyl-[protein] + A + AMP + diphosphate + H(+). In terms of biological role, catalyzes the 2-thiolation of uridine at the wobble position (U34) of tRNA, leading to the formation of s(2)U34. The sequence is that of tRNA-specific 2-thiouridylase MnmA from Burkholderia mallei (strain NCTC 10247).